Reading from the N-terminus, the 809-residue chain is F-BAR domain only protein 2 (809 aa).

The F-BAR domain occupies 3–250 (MAHFVENFWG…NMANTTIESL (248 aa)). Residues 3 to 274 (MAHFVENFWG…PGLIEFEECD (272 aa)) form a mediates dimerization and binding to membranes enriched in Pi(4,5)-P2 and induces their tubulation region. A coiled-coil region spans residues 87–156 (HLDLVRKLQE…CVEQERLKKE (70 aa)). A Glycyl lysine isopeptide (Lys-Gly) (interchain with G-Cter in SUMO2) cross-link involves residue lysine 297. Residues 301–352 (DAESVECPDADSLNIPDVDEEGFSIKPEANQNDTKENHFYSSSDSDSEDEEP) form a disordered region. Serine 312 is modified (phosphoserine). A Phosphothreonine modification is found at threonine 385. Phosphoserine is present on residues serine 387, serine 394, serine 402, and serine 403. Residues 390 to 416 (VSRHSPVQMNRNSSNEELTKSKPSSLP) are compositionally biased toward polar residues. Disordered stretches follow at residues 390–422 (VSRH…KGTN) and 435–536 (LESS…PVSL). Positions 435-456 (LESSSAPLTSSSSARPTTPLSL) are enriched in low complexity. Serine 487, serine 492, serine 495, serine 507, serine 509, serine 510, and serine 532 each carry phosphoserine. A compositionally biased stretch (low complexity) spans 501–520 (PLARAESSSSISSSASLSAA). The segment at 520–809 (ANTPTVGVSR…FATGRYLADC (290 aa)) is mediates interaction with DAB2, EPS15, EPS15R and ITSN1. Residues 541–808 (TLPVAIALTE…RFATGRYLAD (268 aa)) form the MHD domain.

It belongs to the FCHO family. Homodimer; disulfide-linked. May form homotetramer. Interacts with AP2A1. Interacts with EPS15, EPS15R, ITSN1 and ITSN2; recruit those scaffolding proteins which in turn may interact with the adaptor protein complex AP-2 at the plasma membrane. Interacts with DAB2 (via DPF motifs); mediates LDL receptor/LDLR endocytosis. Ubiquitinated. Mainly undergoes monoubiquitination but also polyubiquitination. Ubiquitously expressed (at protein level).

Its subcellular location is the membrane. The protein resides in the clathrin-coated pit. Functionally, functions in an early step of clathrin-mediated endocytosis. Has both a membrane binding/bending activity and the ability to recruit proteins essential to the formation of functional clathrin-coated pits. Has a lipid-binding activity with a preference for membranes enriched in phosphatidylserine and phosphoinositides (Pi(4,5) biphosphate) like the plasma membrane. Its membrane-bending activity might be important for the subsequent action of clathrin and adaptors in the formation of clathrin-coated vesicles. Involved in adaptor protein complex AP-2-dependent endocytosis of the transferrin receptor, it also functions in the AP-2-independent endocytosis of the LDL receptor. This chain is F-BAR domain only protein 2 (Fcho2), found in Mus musculus (Mouse).